We begin with the raw amino-acid sequence, 589 residues long: MSTNYTAINHILHFHSPNSCFLMIMSLEFEQMDEANRLSAWNGYVDWRSRPALRGRHGGMLAASFVLVVEVLENLAFLANASNLVLYLSTKMGFSPSGAANAVTAFMGTAFFLALLGGFLADAFFTTFHIYLVSAAIEFLGLMVLTVQAHEHSTEPWSRVFLFVGLYLVALGVGGIKGSLPPHGAEQFDEETSSGRRQRSFFFNYFIFSLSCGALIAVTVVVWLEDNKGWSYGFGVSTAAILISVPVFLAGSRVYRLKVPSGSPITTLFKVLTAALYAKYKKRRTSRIVVTCHTRNDCDDSVTKQNCDGDDGFLGSFLGEVVRERESLPRPLRCTEEQVKDVKIVIKILPIFMSTIMLNCCLAQLSTFSVQQASTMNTKLGSFTVPPAALPVFPVVFMMILAPTYNHLLLPLARKSTKTETGITHLQRIGTGLVLSIVAMAVAALVETKRKHVVVSCCSNNNSSSYSSSPLPITFLWVAIQYVFLGSADLFTLAGMMEFFFTEAPSTMRSLATSLSWASLAMGYYFSSVLVSAVNFVTGLNHHNPWLLGENLNQYHLERFYWLMCVLSGINFLHYLFWASRYVYRSNQG.

12 consecutive transmembrane segments (helical) span residues 59–79, 105–125, 127–147, 160–180, 201–221, 230–250, 344–364, 383–403, 429–449, 471–491, 520–540, and 560–580; these read GMLAASFVLVVEVLENLAFLA, AFMGTAFFLALLGGFLADAFF, TFHIYLVSAAIEFLGLMVLTV, VFLFVGLYLVALGVGGIKGSL, FFFNYFIFSLSCGALIAVTVV, WSYGFGVSTAAILISVPVFLA, IVIKILPIFMSTIMLNCCLAQ, FTVPPAALPVFPVVFMMILAP, IGTGLVLSIVAMAVAALVETK, LPITFLWVAIQYVFLGSADLF, LAMGYYFSSVLVSAVNFVTGL, and FYWLMCVLSGINFLHYLFWAS.

The protein belongs to the major facilitator superfamily. Proton-dependent oligopeptide transporter (POT/PTR) (TC 2.A.17) family. As to expression, expressed in flowers.

It is found in the membrane. This Arabidopsis thaliana (Mouse-ear cress) protein is Protein NRT1/ PTR FAMILY 4.7 (NPF4.7).